The chain runs to 382 residues: Pregnancy-associated glycoprotein 1 (382 aa).

The signal sequence occupies residues 1–15 (MKWLVLLGLVAFSEC). The propeptide at 16 to 53 (IVKIPLRRVKTMRNTLSGKKMLNSFLKEHAYRLSQISF) is activation peptide. Residues Asn57 and Asn74 are each glycosylated (N-linked (GlcNAc...) asparagine). The Peptidase A1 domain occupies 71–379 (YVGNITIGTP…DRGNDRIGLA (309 aa)). An intrachain disulfide couples Cys102 to Cys110. Asn128 is a glycosylation site (N-linked (GlcNAc...) asparagine). 2 disulfides stabilise this stretch: Cys263-Cys267 and Cys305-Cys339.

The protein belongs to the peptidase A1 family. In terms of tissue distribution, trophoblast and placental tissue. Produced specifically in the invasive binucleate cells of the placenta.

It localises to the secreted. The protein localises to the extracellular space. In terms of biological role, has no proteolytic activity. The chain is Pregnancy-associated glycoprotein 1 from Ovis aries (Sheep).